The sequence spans 298 residues: MVAISMIWFFTKRMPRIFALAFNLISIFLLIFLLIGCYNPSNQSTFLVKYKFDDNSPFYTIIEKSYEKSNTTLGLEEVIIRSGYMGVCIDNIPSQYSSYNNMTTFSNSICYARKNLSSVPLYRDLEIQLSNIASSSSKTQSSVVLNILKLAQLTSVNVIHPYVLMATVILTILMFLFILYVTVPKLPFKLAVNKFLLLLSSTIVLTWGIGAMWTHVGINASYRLVPSSSMNIITVKKGKKAAVMAWFSFAFLLLDSVVLWLIFLRDRKSLKDEIDNVPCAQNRYNNYSSDSSTLHSKV.

The next 4 membrane-spanning stretches (helical) occupy residues 17 to 37 (IFAL…LIGC), 163 to 183 (VLMA…YVTV), 195 to 215 (FLLL…MWTH), and 243 to 263 (VMAW…WLIF). Phosphoserine is present on Ser-288. Thr-293 bears the Phosphothreonine mark. Position 296 is a phosphoserine (Ser-296).

Its subcellular location is the membrane. Its function is as follows. Required for efficient mating. The polypeptide is Factor-induced gene 1 protein (FIG1) (Saccharomyces cerevisiae (strain ATCC 204508 / S288c) (Baker's yeast)).